Consider the following 445-residue polypeptide: Phosphoglucosamine mutase (445 aa).

Serine 101 acts as the Phosphoserine intermediate in catalysis. Serine 101, aspartate 240, aspartate 242, and aspartate 244 together coordinate Mg(2+). Serine 101 bears the Phosphoserine mark.

It belongs to the phosphohexose mutase family. Requires Mg(2+) as cofactor. In terms of processing, activated by phosphorylation.

The catalysed reaction is alpha-D-glucosamine 1-phosphate = D-glucosamine 6-phosphate. In terms of biological role, catalyzes the conversion of glucosamine-6-phosphate to glucosamine-1-phosphate. The protein is Phosphoglucosamine mutase of Pseudomonas fluorescens (strain Pf0-1).